We begin with the raw amino-acid sequence, 288 residues long: ATP synthase gamma chain (288 aa).

This sequence belongs to the ATPase gamma chain family. In terms of assembly, F-type ATPases have 2 components, CF(1) - the catalytic core - and CF(0) - the membrane proton channel. CF(1) has five subunits: alpha(3), beta(3), gamma(1), delta(1), epsilon(1). CF(0) has three main subunits: a, b and c.

The protein resides in the cell inner membrane. Produces ATP from ADP in the presence of a proton gradient across the membrane. The gamma chain is believed to be important in regulating ATPase activity and the flow of protons through the CF(0) complex. In Rickettsia bellii (strain OSU 85-389), this protein is ATP synthase gamma chain.